We begin with the raw amino-acid sequence, 325 residues long: Cytochrome c1, heme protein, mitochondrial (325 aa).

Residues 1–84 constitute a mitochondrion transit peptide; sequence MAAAAASLRG…AMALHSAVSA (84 aa). Over 85–281 the chain is Mitochondrial intermembrane; that stretch reads SDLELHPPSY…TFLRWASEPE (197 aa). The Cytochrome c domain maps to 108 to 209; the sequence is TSIRRGFQVY…IVRARHGGED (102 aa). Cys-121, Cys-124, and His-125 together coordinate heme c. The residue at position 182 (Ser-182) is a Phosphoserine. Met-244 contributes to the heme c binding site. The helical transmembrane segment at 282-315 threads the bilayer; the sequence is HDHRKRMGLKMLMMMALLVPLVYTIKRHKWSVLK. Residues 316-325 lie on the Mitochondrial matrix side of the membrane; it reads SRKLAYRPPK.

This sequence belongs to the cytochrome c family. As to quaternary structure, component of the ubiquinol-cytochrome c oxidoreductase (cytochrome b-c1 complex, complex III, CIII), a multisubunit enzyme composed of 11 subunits. The complex is composed of 3 respiratory subunits cytochrome b, cytochrome c1 and Rieske protein UQCRFS1, 2 core protein subunits UQCRC1/QCR1 and UQCRC2/QCR2, and 6 low-molecular weight protein subunits UQCRH/QCR6, UQCRB/QCR7, UQCRQ/QCR8, UQCR10/QCR9, UQCR11/QCR10 and subunit 9, the cleavage product of Rieske protein UQCRFS1. The complex exists as an obligatory dimer and forms supercomplexes (SCs) in the inner mitochondrial membrane with NADH-ubiquinone oxidoreductase (complex I, CI) and cytochrome c oxidase (complex IV, CIV), resulting in different assemblies (supercomplex SCI(1)III(2)IV(1) and megacomplex MCI(2)III(2)IV(2)). Interacts with FLVCR2; this interaction occurs in the absence of heme and is disrupted upon heme binding. Heme c serves as cofactor.

It localises to the mitochondrion inner membrane. It catalyses the reaction a quinol + 2 Fe(III)-[cytochrome c](out) = a quinone + 2 Fe(II)-[cytochrome c](out) + 2 H(+)(out). Its function is as follows. Component of the ubiquinol-cytochrome c oxidoreductase, a multisubunit transmembrane complex that is part of the mitochondrial electron transport chain which drives oxidative phosphorylation. The respiratory chain contains 3 multisubunit complexes succinate dehydrogenase (complex II, CII), ubiquinol-cytochrome c oxidoreductase (cytochrome b-c1 complex, complex III, CIII) and cytochrome c oxidase (complex IV, CIV), that cooperate to transfer electrons derived from NADH and succinate to molecular oxygen, creating an electrochemical gradient over the inner membrane that drives transmembrane transport and the ATP synthase. The cytochrome b-c1 complex catalyzes electron transfer from ubiquinol to cytochrome c, linking this redox reaction to translocation of protons across the mitochondrial inner membrane, with protons being carried across the membrane as hydrogens on the quinol. In the process called Q cycle, 2 protons are consumed from the matrix, 4 protons are released into the intermembrane space and 2 electrons are passed to cytochrome c. Cytochrome c1 is a catalytic core subunit containing a c-type heme. It transfers electrons from the [2Fe-2S] iron-sulfur cluster of the Rieske protein to cytochrome c. The sequence is that of Cytochrome c1, heme protein, mitochondrial (CYC1) from Homo sapiens (Human).